Here is a 135-residue protein sequence, read N- to C-terminus: UPF0299 membrane protein ECA2828 (135 aa).

A run of 4 helical transmembrane segments spans residues 5 to 25 (FIVC…LLAG), 30 to 50 (ALLP…FTLL), 63 to 83 (GCYL…VGVM), and 93 to 113 (FGPI…VVGF).

The protein belongs to the UPF0299 family.

It is found in the cell inner membrane. The chain is UPF0299 membrane protein ECA2828 from Pectobacterium atrosepticum (strain SCRI 1043 / ATCC BAA-672) (Erwinia carotovora subsp. atroseptica).